We begin with the raw amino-acid sequence, 506 residues long: ATP synthase subunit alpha (506 aa).

Positions 119–129 are enriched in basic and acidic residues; it reads GPIEYEGKRPI. The disordered stretch occupies residues 119 to 138; the sequence is GPIEYEGKRPIESPAPPIVR. ATP is bound at residue 169-176; it reads GDRQTGKT.

The protein belongs to the ATPase alpha/beta chains family. As to quaternary structure, F-type ATPases have 2 components, CF(1) - the catalytic core - and CF(0) - the membrane proton channel. CF(1) has five subunits: alpha(3), beta(3), gamma(1), delta(1), epsilon(1). CF(0) has three main subunits: a(1), b(2) and c(9-12). The alpha and beta chains form an alternating ring which encloses part of the gamma chain. CF(1) is attached to CF(0) by a central stalk formed by the gamma and epsilon chains, while a peripheral stalk is formed by the delta and b chains.

It is found in the cell membrane. The enzyme catalyses ATP + H2O + 4 H(+)(in) = ADP + phosphate + 5 H(+)(out). In terms of biological role, produces ATP from ADP in the presence of a proton gradient across the membrane. The alpha chain is a regulatory subunit. The chain is ATP synthase subunit alpha from Caldanaerobacter subterraneus subsp. tengcongensis (strain DSM 15242 / JCM 11007 / NBRC 100824 / MB4) (Thermoanaerobacter tengcongensis).